The following is a 53-amino-acid chain: UPF0391 membrane protein Bxeno_A2958 (53 aa).

The next 2 helical transmembrane spans lie at 5–25 (AIVF…GIAA) and 30–50 (IAKI…LLGV).

Belongs to the UPF0391 family.

Its subcellular location is the cell membrane. This is UPF0391 membrane protein Bxeno_A2958 from Paraburkholderia xenovorans (strain LB400).